Here is a 233-residue protein sequence, read N- to C-terminus: Pyridoxine 5'-phosphate synthase (233 aa).

N6 is a 3-amino-2-oxopropyl phosphate binding site. 1-deoxy-D-xylulose 5-phosphate is bound at residue 8 to 9 (DH). Residue R17 participates in 3-amino-2-oxopropyl phosphate binding. Residue H42 is the Proton acceptor of the active site. The 1-deoxy-D-xylulose 5-phosphate site is built by R44 and H49. The Proton acceptor role is filled by E69. 1-deoxy-D-xylulose 5-phosphate is bound at residue T99. H186 functions as the Proton donor in the catalytic mechanism. 3-amino-2-oxopropyl phosphate is bound by residues G187 and 208-209 (GH).

The protein belongs to the PNP synthase family. Homooctamer; tetramer of dimers.

The protein localises to the cytoplasm. The catalysed reaction is 3-amino-2-oxopropyl phosphate + 1-deoxy-D-xylulose 5-phosphate = pyridoxine 5'-phosphate + phosphate + 2 H2O + H(+). It functions in the pathway cofactor biosynthesis; pyridoxine 5'-phosphate biosynthesis; pyridoxine 5'-phosphate from D-erythrose 4-phosphate: step 5/5. Functionally, catalyzes the complicated ring closure reaction between the two acyclic compounds 1-deoxy-D-xylulose-5-phosphate (DXP) and 3-amino-2-oxopropyl phosphate (1-amino-acetone-3-phosphate or AAP) to form pyridoxine 5'-phosphate (PNP) and inorganic phosphate. This is Pyridoxine 5'-phosphate synthase from Anaplasma phagocytophilum (strain HZ).